A 408-amino-acid polypeptide reads, in one-letter code: Peptidase T (408 aa).

The disordered stretch occupies residues Met1–Ser28. Positions Arg11 to Ser28 are enriched in polar residues. His78 contributes to the Zn(2+) binding site. Asp80 is a catalytic residue. Residue Asp140 participates in Zn(2+) binding. The active-site Proton acceptor is Glu174. Residues Glu175, Asp197, and His379 each coordinate Zn(2+).

The protein belongs to the peptidase M20B family. The cofactor is Zn(2+).

It localises to the cytoplasm. The enzyme catalyses Release of the N-terminal residue from a tripeptide.. Its function is as follows. Cleaves the N-terminal amino acid of tripeptides. This Staphylococcus aureus (strain USA300 / TCH1516) protein is Peptidase T.